The chain runs to 130 residues: Small ribosomal subunit protein uS8 (130 aa).

Lysine 88 bears the N6-succinyllysine mark.

This sequence belongs to the universal ribosomal protein uS8 family. Component of the small ribosomal subunit. Part of the small subunit (SSU) processome, composed of more than 70 proteins and the RNA chaperone small nucleolar RNA (snoRNA) U3.

The protein localises to the cytoplasm. It is found in the nucleus. Its subcellular location is the nucleolus. In terms of biological role, component of the small ribosomal subunit. The ribosome is a large ribonucleoprotein complex responsible for the synthesis of proteins in the cell. Part of the small subunit (SSU) processome, first precursor of the small eukaryotic ribosomal subunit. During the assembly of the SSU processome in the nucleolus, many ribosome biogenesis factors, an RNA chaperone and ribosomal proteins associate with the nascent pre-rRNA and work in concert to generate RNA folding, modifications, rearrangements and cleavage as well as targeted degradation of pre-ribosomal RNA by the RNA exosome. Required for proper erythropoiesis. The polypeptide is Small ribosomal subunit protein uS8 (Rps15a) (Mus musculus (Mouse)).